The sequence spans 106 residues: UPF0145 protein Dhaf_3855 (106 aa).

Belongs to the UPF0145 family.

The protein is UPF0145 protein Dhaf_3855 of Desulfitobacterium hafniense (strain DSM 10664 / DCB-2).